A 387-amino-acid chain; its full sequence is GTPase Obg (387 aa).

An Obg domain is found at 1 to 159 (MKFVDEAIIR…RSLKLELLLL (159 aa)). In terms of domain architecture, OBG-type G spans 160-333 (ADVGLLGMPN…LALKLLDFID (174 aa)). GTP contacts are provided by residues 166 to 173 (GMPNAGKS), 191 to 195 (FTTLV), 213 to 216 (DIPG), 283 to 286 (NKAD), and 314 to 316 (SAY). Serine 173 and threonine 193 together coordinate Mg(2+).

This sequence belongs to the TRAFAC class OBG-HflX-like GTPase superfamily. OBG GTPase family. As to quaternary structure, monomer. Mg(2+) serves as cofactor.

Its subcellular location is the cytoplasm. Functionally, an essential GTPase which binds GTP, GDP and possibly (p)ppGpp with moderate affinity, with high nucleotide exchange rates and a fairly low GTP hydrolysis rate. Plays a role in control of the cell cycle, stress response, ribosome biogenesis and in those bacteria that undergo differentiation, in morphogenesis control. The chain is GTPase Obg from Shewanella pealeana (strain ATCC 700345 / ANG-SQ1).